The following is a 669-amino-acid chain: MSKEIAKKRIEELRDLLNTFNYQYHVLDNPSVSDAEYDRNMQELIKLEAENPEFMSEDSPSVRVGGTILDIFEKVTHKSPMLSLGNAFNEGDLRDFDRRVRQGIDDANVRYICELKIDGLAVSLHYEKGRFIQGATRGDGVTGEDITQNLKTIKAIPLRLNEEVTLEARGEAYMPKRSFVKLNEEKEQNGEDVFANPRNAAAGSIRQLDPKIAAKRNLSMFVYGLANVEEKTIPSHSESLDFLGELGFKTNPNRRTCETIEEVIAYVEEWQEKRPHLDYEIDGIVIKVDDVALQESLGTTAKSPRWAIAYKFPAEEVVTRLTGIELSVGRTGVVTPTAELEPVRVAGTIVRRASLHNEDLIREKDIRIGDYVVVKKAGDIIPEVVNVIFDKRTGEEEEYRMPTHCPACESELVRLEEEVALRCINPTCPAQIREGLIHFVSRNAMNIDGLGERVITQLFDADYIRTFADLYALTKEQLLQLERFGEKSATNLIQAIENSKENSLERLLFGLGIRHVGAKAARTFAEHFETMDELVKATEEELKAINEIGEKMAQSVVTYFDNEDVLELLQQFKEYGVNMTYKGIKIADLQNVESYFAGKTVVLTGKLEVMGRSEAKKKIEALGGKVTGSVSKSTDLVVAGESAGSKLAQAEKHNVEVWNEERFLQELNK.

NAD(+) is bound by residues 34–38 (DAEYD), 83–84 (SL), and E114. K116 serves as the catalytic N6-AMP-lysine intermediate. Positions 137, 171, 287, and 311 each coordinate NAD(+). Residues C405, C408, C423, and C428 each coordinate Zn(2+). Residues 591–669 (NVESYFAGKT…EERFLQELNK (79 aa)) form the BRCT domain.

This sequence belongs to the NAD-dependent DNA ligase family. LigA subfamily. It depends on Mg(2+) as a cofactor. Mn(2+) is required as a cofactor.

It catalyses the reaction NAD(+) + (deoxyribonucleotide)n-3'-hydroxyl + 5'-phospho-(deoxyribonucleotide)m = (deoxyribonucleotide)n+m + AMP + beta-nicotinamide D-nucleotide.. Its function is as follows. DNA ligase that catalyzes the formation of phosphodiester linkages between 5'-phosphoryl and 3'-hydroxyl groups in double-stranded DNA using NAD as a coenzyme and as the energy source for the reaction. It is essential for DNA replication and repair of damaged DNA. This is DNA ligase from Bacillus cereus (strain G9842).